Here is a 486-residue protein sequence, read N- to C-terminus: ATP synthase subunit beta, chloroplastic (486 aa).

154–161 contributes to the ATP binding site; the sequence is GGAGVGKT.

The protein belongs to the ATPase alpha/beta chains family. F-type ATPases have 2 components, CF(1) - the catalytic core - and CF(0) - the membrane proton channel. CF(1) has five subunits: alpha(3), beta(3), gamma(1), delta(1), epsilon(1). CF(0) has four main subunits: a(1), b(1), b'(1) and c(9-12).

It is found in the plastid. It localises to the chloroplast thylakoid membrane. The catalysed reaction is ATP + H2O + 4 H(+)(in) = ADP + phosphate + 5 H(+)(out). Functionally, produces ATP from ADP in the presence of a proton gradient across the membrane. The catalytic sites are hosted primarily by the beta subunits. This is ATP synthase subunit beta, chloroplastic from Dennstaedtia punctilobula (Hay-scented fern).